A 333-amino-acid polypeptide reads, in one-letter code: NADH-quinone oxidoreductase subunit H (333 aa).

8 helical membrane-spanning segments follow: residues Val8–Trp28, Ile75–Ile95, Ile108–Gly128, Met154–Val174, Pro191–Ala211, Ile251–Gly271, Phe273–Ile293, and Ile312–Ala332.

This sequence belongs to the complex I subunit 1 family. As to quaternary structure, NDH-1 is composed of 14 different subunits. Subunits NuoA, H, J, K, L, M, N constitute the membrane sector of the complex.

It localises to the cell inner membrane. It carries out the reaction a quinone + NADH + 5 H(+)(in) = a quinol + NAD(+) + 4 H(+)(out). In terms of biological role, NDH-1 shuttles electrons from NADH, via FMN and iron-sulfur (Fe-S) centers, to quinones in the respiratory chain. The immediate electron acceptor for the enzyme in this species is believed to be ubiquinone. Couples the redox reaction to proton translocation (for every two electrons transferred, four hydrogen ions are translocated across the cytoplasmic membrane), and thus conserves the redox energy in a proton gradient. This subunit may bind ubiquinone. The polypeptide is NADH-quinone oxidoreductase subunit H (Desulfotalea psychrophila (strain LSv54 / DSM 12343)).